We begin with the raw amino-acid sequence, 150 residues long: METVKKPIDLNEIKTLIPHRYPMLLVDKVIDHEPGKTLHAIKNVTINEPVFTGHFPELAIFPGVLILEALAQATGILGFKSTEGRGDNEMYLFASIDKAKFKKPVLPGDTMHLHVEFLKERRGMWKFYGEARVDGKVVCSADLMCARRPL.

The active site involves His-54.

This sequence belongs to the thioester dehydratase family. FabZ subfamily.

Its subcellular location is the cytoplasm. It carries out the reaction a (3R)-hydroxyacyl-[ACP] = a (2E)-enoyl-[ACP] + H2O. Its function is as follows. Involved in unsaturated fatty acids biosynthesis. Catalyzes the dehydration of short chain beta-hydroxyacyl-ACPs and long chain saturated and unsaturated beta-hydroxyacyl-ACPs. This is 3-hydroxyacyl-[acyl-carrier-protein] dehydratase FabZ from Colwellia psychrerythraea (strain 34H / ATCC BAA-681) (Vibrio psychroerythus).